A 486-amino-acid polypeptide reads, in one-letter code: Ribosomal RNA small subunit methyltransferase F (486 aa).

Residues 124-130 (ASAPGSK), glutamate 148, aspartate 175, and aspartate 193 contribute to the S-adenosyl-L-methionine site. Cysteine 246 functions as the Nucleophile in the catalytic mechanism.

The protein belongs to the class I-like SAM-binding methyltransferase superfamily. RsmB/NOP family.

The protein localises to the cytoplasm. It carries out the reaction cytidine(1407) in 16S rRNA + S-adenosyl-L-methionine = 5-methylcytidine(1407) in 16S rRNA + S-adenosyl-L-homocysteine + H(+). Functionally, specifically methylates the cytosine at position 1407 (m5C1407) of 16S rRNA. The protein is Ribosomal RNA small subunit methyltransferase F of Shewanella baltica (strain OS185).